The following is a 95-amino-acid chain: UPF0235 protein Sama_2480 (95 aa).

Belongs to the UPF0235 family.

In Shewanella amazonensis (strain ATCC BAA-1098 / SB2B), this protein is UPF0235 protein Sama_2480.